The following is a 486-amino-acid chain: Glutamyl-tRNA(Gln) amidotransferase subunit A (486 aa).

Catalysis depends on charge relay system residues K78 and S153. S177 serves as the catalytic Acyl-ester intermediate.

This sequence belongs to the amidase family. GatA subfamily. In terms of assembly, heterotrimer of A, B and C subunits.

It carries out the reaction L-glutamyl-tRNA(Gln) + L-glutamine + ATP + H2O = L-glutaminyl-tRNA(Gln) + L-glutamate + ADP + phosphate + H(+). In terms of biological role, allows the formation of correctly charged Gln-tRNA(Gln) through the transamidation of misacylated Glu-tRNA(Gln) in organisms which lack glutaminyl-tRNA synthetase. The reaction takes place in the presence of glutamine and ATP through an activated gamma-phospho-Glu-tRNA(Gln). In Ruminiclostridium cellulolyticum (strain ATCC 35319 / DSM 5812 / JCM 6584 / H10) (Clostridium cellulolyticum), this protein is Glutamyl-tRNA(Gln) amidotransferase subunit A.